We begin with the raw amino-acid sequence, 228 residues long: ATP-dependent dethiobiotin synthetase BioD (228 aa).

14–19 (DAGKTL) lines the ATP pocket. Mg(2+) is bound at residue Thr-18. Lys-39 is an active-site residue. ATP is bound by residues Asp-56, 117–120 (EGAG), and 206–208 (PRL). Residues Asp-56 and Glu-117 each contribute to the Mg(2+) site.

This sequence belongs to the dethiobiotin synthetase family. Homodimer. Mg(2+) is required as a cofactor.

It localises to the cytoplasm. It catalyses the reaction (7R,8S)-7,8-diammoniononanoate + CO2 + ATP = (4R,5S)-dethiobiotin + ADP + phosphate + 3 H(+). The protein operates within cofactor biosynthesis; biotin biosynthesis; biotin from 7,8-diaminononanoate: step 1/2. Catalyzes a mechanistically unusual reaction, the ATP-dependent insertion of CO2 between the N7 and N8 nitrogen atoms of 7,8-diaminopelargonic acid (DAPA, also called 7,8-diammoniononanoate) to form a ureido ring. The chain is ATP-dependent dethiobiotin synthetase BioD from Cellvibrio japonicus (strain Ueda107) (Pseudomonas fluorescens subsp. cellulosa).